Consider the following 140-residue polypeptide: MRIMGLDYGDRRIGVAISDKLGMTAQGQEVIIRKTPEEDLEVIKGLIDKYEVEEIIVGMPKNMDGSLGPRAEKTRDFIDFLQKSLDTPVKVWDERLSTVEAERVLIEADVSRKKRKGVIDKVAASIILQGYLNYQNKLHG.

The protein belongs to the YqgF nuclease family.

Its subcellular location is the cytoplasm. Could be a nuclease involved in processing of the 5'-end of pre-16S rRNA. The chain is Putative pre-16S rRNA nuclease from Halothermothrix orenii (strain H 168 / OCM 544 / DSM 9562).